A 575-amino-acid chain; its full sequence is MIIIKRFLHIKTVPKSYGNQLSKFKYSKQIPTHEVLTKLGYITYPRAGLVNWSKMGLLIQNKISQIIRQRMDEIQFEEVSLSLISHKELWKLTNRWDQEEIFKLVGDEYLLVPTAEEEITNYVKKQFLESYKNFPLALYQINPKFRNEKRPRGGLLRGKEFLMKDAYSFDLNESEAMKTYEKVVGAYHKIFQDLGIPYVKAEADSGDIGGSLSHEWHYLNSSGEDTVFECNECHNVSNMEKALSYPKEIDETIEVSVIYFTTEDKSTLICAYYPSNRVLEPKFIQNEIPDIDLDSINDLSEFNHDISTRIVRIMDSRLSSRSKFPDFPISNFINRSLITTLTDIPIVLAQEGEICGHCEEGKLSASSAIEVGHTFYLGDKYSKPLDLEVDVPTSNNSIEKQRIMMGCYGIGISRIIAAIAEINRDEKGLKWPRSIAPWEVTVVEVSKQKQLKNVNDNNHHNNPQDNFQEIYNILNQANIDYRLDNRSDSMGKKLKQSDLLGIPLSIILGNQYPIIEIEVRGNKKNNNNNSWLQSYTENKDQFDWKVETDAQGNDTKHYIHKDGLVTVVNSLLNDM.

Belongs to the class-II aminoacyl-tRNA synthetase family.

The protein localises to the cytoplasm. It carries out the reaction tRNA(Pro) + L-proline + ATP = L-prolyl-tRNA(Pro) + AMP + diphosphate. The protein is Proline--tRNA ligase, cytoplasmic (PRS) of Candida albicans (Yeast).